The chain runs to 561 residues: Zinc finger protein 37A (561 aa).

One can recognise a KRAB domain in the interval 8–79; it reads VSFRDVTVGF…EEKFPSQSHL (72 aa). The C2H2-type 1; degenerate zinc finger occupies 146 to 168; sequence FEYNECGKAFPENSLFLVHKRGY. The C2H2-type 2; degenerate zinc finger occupies 243-265; sequence IEYNECGTFFSEKLVLHLQQRTH. C2H2-type zinc fingers lie at residues 271 to 293, 299 to 321, 327 to 349, 355 to 377, 383 to 405, 411 to 433, 439 to 461, 467 to 489, 495 to 517, and 523 to 545; these read YECHECGKTFTQKSAHTRHQRTH, YECHECGKTFYKNSDLIKHQRIH, YGCHECGKSFSEKSTLTQHQRTH, YECHECGKTFSFKSVLTVHQKTH, YECYACGKAFLRKSDLIKHQRIH, YECNECGKSFSEKSTLTKHLRTH, YECIQCGKFFCYYSGFTEHLRRH, FGCNECGKTFRQKSALIVHQRTH, YGCNQCGKSFCVKSKLIAHHRTH, and YECNVCGKSFYVKSKLTVHQRIH.

This sequence belongs to the krueppel C2H2-type zinc-finger protein family.

The protein localises to the nucleus. Functionally, may be involved in transcriptional regulation. In Homo sapiens (Human), this protein is Zinc finger protein 37A (ZNF37A).